A 150-amino-acid chain; its full sequence is SsrA-binding protein (150 aa).

Positions 130–150 (DKRESLKEKDDRREMDRMFKR) are disordered.

It belongs to the SmpB family.

The protein localises to the cytoplasm. Required for rescue of stalled ribosomes mediated by trans-translation. Binds to transfer-messenger RNA (tmRNA), required for stable association of tmRNA with ribosomes. tmRNA and SmpB together mimic tRNA shape, replacing the anticodon stem-loop with SmpB. tmRNA is encoded by the ssrA gene; the 2 termini fold to resemble tRNA(Ala) and it encodes a 'tag peptide', a short internal open reading frame. During trans-translation Ala-aminoacylated tmRNA acts like a tRNA, entering the A-site of stalled ribosomes, displacing the stalled mRNA. The ribosome then switches to translate the ORF on the tmRNA; the nascent peptide is terminated with the 'tag peptide' encoded by the tmRNA and targeted for degradation. The ribosome is freed to recommence translation, which seems to be the essential function of trans-translation. The sequence is that of SsrA-binding protein from Phocaeicola vulgatus (strain ATCC 8482 / DSM 1447 / JCM 5826 / CCUG 4940 / NBRC 14291 / NCTC 11154) (Bacteroides vulgatus).